The primary structure comprises 319 residues: 12-(S)-hydroxy-5,8,10,14-eicosatetraenoic acid receptor (319 aa).

The Extracellular portion of the chain corresponds to 1 to 16 (MPFPNCSAPSTVVATA). Asn5 carries N-linked (GlcNAc...) asparagine glycosylation. A helical membrane pass occupies residues 17–37 (VGVLLGLECGLGLLGNAVALW). At 38-52 (TFLFRVRVWKPYAVY) the chain is on the cytoplasmic side. A helical transmembrane segment spans residues 53-73 (LLNLALADLLLAACLPFLAAF). Over 74 to 91 (YLSLQAWHLGRVGCWALH) the chain is Extracellular. Residues 92 to 110 (FLLDLSRSVGMAFLAAVAL) traverse the membrane as a helical segment. Topologically, residues 111–131 (DRYLRVVHPRLKVNLLSPQAA) are cytoplasmic. The chain crosses the membrane as a helical span at residues 132–152 (LGVSGLVWLLMVALTCPGLLI). Topologically, residues 153 to 180 (SEAAQNSTRCHSFYSRADGSFSIIWQEA) are extracellular. Residues 181–201 (LSCLQFVLPFGLIVFCNAGII) traverse the membrane as a helical segment. Residues 202-219 (RALQKRLREPEKQPKLQR) are Cytoplasmic-facing. The chain crosses the membrane as a helical span at residues 220-240 (AQALVTLVVVLFALCFLPCFL). Topologically, residues 241-265 (ARVLMHIFQNLGSCRALCAVAHTSD) are extracellular. Residues 266–284 (VTGSLTYLHSVLNPVVYCF) form a helical membrane-spanning segment. Residues 285 to 319 (SSPTFRSSYRRVFHTLRGKGQAAEPPDFNPRDSYS) are Cytoplasmic-facing.

This sequence belongs to the G-protein coupled receptor 1 family. As to quaternary structure, interacts with KRAS; in a farnesylation-dependent manner.

The protein resides in the cell membrane. Its function is as follows. High-affinity receptor for 12-(S)-hydroxy-5,8,10,14-eicosatetraenoic acid (12-S-HETE), with much lower affinities for other HETE isomers. 12-S-HETE is a eicosanoid, a 12-lipoxygenase (ALOX12) metabolite of arachidonic acid, involved in many physiologic and pathologic processes. 12-S-HETE-binding leads to activation of ERK1/2 (MAPK3/MAPK1), MEK, and NF-kappa-B pathways leading to cell growth. Plays a crucial role for proliferation, survival and macropinocytosis of KRAS-dependent cancer cells by mediating the translocation of KRAS from the endoplasmic reticulum to the plasma membrane (PM) and its association with the PM. Contributes to enhanced immune responses by inducing dendrite protrusion of small intestinal CX3CR1(+) phagocytes for the uptake of luminal antigens. Acts also as a key receptor for 12-(S)-HETE-mediated liver ischemia reperfusion injury. Proton-sensing G protein-coupled receptor. The protein is 12-(S)-hydroxy-5,8,10,14-eicosatetraenoic acid receptor (GPR31) of Homo sapiens (Human).